The following is a 432-amino-acid chain: Pachytene checkpoint protein 2 homolog (432 aa).

An ATP-binding site is contributed by 179–186; sequence GPPGTGKT.

This sequence belongs to the AAA ATPase family. PCH2 subfamily.

Its function is as follows. Plays a key role in chromosome recombination and chromosome structure development during meiosis. Required at early steps in meiotic recombination that leads to non-crossovers pathways. Also needed for efficient completion of homologous synapsis by influencing crossover distribution along the chromosomes affecting both crossovers and non-crossovers pathways. This chain is Pachytene checkpoint protein 2 homolog (TRIP13), found in Gallus gallus (Chicken).